The following is a 248-amino-acid chain: Proteasome subunit alpha type-7 (248 aa).

S130 carries O-linked (GlcNAc) serine glycosylation. Y153 is modified (phosphotyrosine; by ABL1 and ABL2). K227 is modified (N6-acetyllysine).

The protein belongs to the peptidase T1A family. As to quaternary structure, the 26S proteasome consists of a 20S proteasome core and two 19S regulatory subunits. The 20S proteasome core is a barrel-shaped complex made of 28 subunits that are arranged in four stacked rings. The two outer rings are each formed by seven alpha subunits, and the two inner rings are formed by seven beta subunits. The proteolytic activity is exerted by three beta-subunits PSMB5, PSMB6 and PSMB7. PSMA7 interacts directly with the PSMG1-PSMG2 heterodimer which promotes 20S proteasome assembly. Interacts with HIF1A. Interacts with RAB7A. Interacts with PRKN. Interacts with ABL1 and ABL2. Interacts with EMAP2. Interacts with MAVS. In terms of processing, phosphorylation by ABL1 or ABL2 leads to an inhibition of proteasomal activity and cell cycle transition blocks. Detected in liver (at protein level).

Its subcellular location is the cytoplasm. The protein resides in the nucleus. In terms of biological role, component of the 20S core proteasome complex involved in the proteolytic degradation of most intracellular proteins. This complex plays numerous essential roles within the cell by associating with different regulatory particles. Associated with two 19S regulatory particles, forms the 26S proteasome and thus participates in the ATP-dependent degradation of ubiquitinated proteins. The 26S proteasome plays a key role in the maintenance of protein homeostasis by removing misfolded or damaged proteins that could impair cellular functions, and by removing proteins whose functions are no longer required. Associated with the PA200 or PA28, the 20S proteasome mediates ubiquitin-independent protein degradation. This type of proteolysis is required in several pathways including spermatogenesis (20S-PA200 complex) or generation of a subset of MHC class I-presented antigenic peptides (20S-PA28 complex). The sequence is that of Proteasome subunit alpha type-7 (Psma7) from Mus musculus (Mouse).